A 512-amino-acid chain; its full sequence is 2-isopropylmalate synthase (512 aa).

Residues 4–266 enclose the Pyruvate carboxyltransferase domain; it reads IQFFDTTLRD…ETNIVLNQFK (263 aa). Positions 13, 201, 203, and 237 each coordinate Mn(2+). The segment at 390 to 512 is regulatory domain; the sequence is ELKHLQVQYV…TKQVDFEEVK (123 aa).

This sequence belongs to the alpha-IPM synthase/homocitrate synthase family. LeuA type 1 subfamily. As to quaternary structure, homodimer. Mn(2+) serves as cofactor.

It is found in the cytoplasm. It carries out the reaction 3-methyl-2-oxobutanoate + acetyl-CoA + H2O = (2S)-2-isopropylmalate + CoA + H(+). Its pathway is amino-acid biosynthesis; L-leucine biosynthesis; L-leucine from 3-methyl-2-oxobutanoate: step 1/4. Its function is as follows. Catalyzes the condensation of the acetyl group of acetyl-CoA with 3-methyl-2-oxobutanoate (2-ketoisovalerate) to form 3-carboxy-3-hydroxy-4-methylpentanoate (2-isopropylmalate). This Listeria welshimeri serovar 6b (strain ATCC 35897 / DSM 20650 / CCUG 15529 / CIP 8149 / NCTC 11857 / SLCC 5334 / V8) protein is 2-isopropylmalate synthase.